The chain runs to 333 residues: MGMKRNRPRRGSLAFSPRKRAKRPVPKIRSWPERETVKLLAFPVYKAGTTHALYKENNPKSPNADQDVFTPVTVMEAPDITIAGIRAYGKDTKGLKALTEVWADSFDKELGRKINLPKEPKANTEKLDEVADKIVEVRAIVHTNPKDTNLPKKKPEIIEIKIGGKNISDIIAYAKDIIGKKLSINDVFTGGEFIDTVAITKGKGFQGPVKRWGIKIQFGKHQNKGVGRHTGSIGPWTPKRIMWTVPMAGQVGFHQRTEYNKRILKIGENGSEIVPKGGFLNYGVVKNNYVLVKGSVQGPAKRMVVLREAIRNPEDKFGLPELTYVSTESKQGN.

2 stretches are compositionally biased toward basic residues: residues 1–10 and 17–26; these read MGMKRNRPRR and PRKRAKRPVP. The disordered stretch occupies residues 1 to 29; that stretch reads MGMKRNRPRRGSLAFSPRKRAKRPVPKIR.

This sequence belongs to the universal ribosomal protein uL3 family. Part of the 50S ribosomal subunit. Forms a cluster with proteins L14 and L24e.

One of the primary rRNA binding proteins, it binds directly near the 3'-end of the 23S rRNA, where it nucleates assembly of the 50S subunit. The protein is Large ribosomal subunit protein uL3 of Methanococcus aeolicus (strain ATCC BAA-1280 / DSM 17508 / OCM 812 / Nankai-3).